The primary structure comprises 835 residues: MNQIEQKWQYIWQEEKAFEVSNASSKPKYYVLEMLPYPSGKIHVGHVRNYSIGDVIARFMTMQGFNVLHPMGWDAFGLPAEHAAIKNNSHPKKWTYSNIKNMKKQLKSMGFSYDWSREINSCDPEYYKHEQKFFLELYERNLAYQKESFVNWDPVDNTVLANEQVVDGRGWRSGAIVVKRYLKQWFLKITDYAEELLNEIQNLKEWPEAVRSMQEKWIGKSIGANFHFKIKDNEETTIEVFSTKPETIFGASFIGIAFNHPIIERLVSKTPEILAFITQCSHITRSSELEKTEREGVFTGLFVIHPFDSNIVLPVIITNFVLMDYGTGAIFGCPAHDECDHELAVKMNLSIKQVIKADMDVQKTAYTEDGILINSDFLNGLTSHEAKQEVIGEFEKLGIGKRSVNYRLKDWGISRQRFWGCPIPMIHCEICGIVPVPYKDLPVILPDDVNFDGHGNPLDHHPSWKHVNCPKCDKPAVRETDTFDTFFESSWYFMRYCNSNATEMTDKKACDYWLPVDKYIGGIEHAVMHLLYARFFTKVMNEQNYVSVREPFKGLFTQGMVLHATYKDEHNNWLYPEEVVKKGNEFFHKESNNRVVQGRIEKMSKSKKNLIDLETMQEQYGADAIRLFVLSDSPPEKDLEWSASGIEGCSRFINKLEYMFKAIDSLKDDVNSEVNKELNRLVHFTIKHVAEDIKHFALNRAIARMRELSNAISAEISKDKIDVKTVRHGFNVLVQLLNPFIPHITEEIWQKLGNKERLYNLSFPAFDESMLELDTYIMAVQVNGKLRDTYEFKTSVSEDEIKQVTVSLPKVQKFLEGQEPKKIILVPRKIVNILV.

A 'HIGH' region motif is present at residues 36–46 (PYPSGKIHVGH). The 'KMSKS' region signature appears at 602 to 606 (KMSKS). Position 605 (K605) interacts with ATP.

It belongs to the class-I aminoacyl-tRNA synthetase family.

It localises to the cytoplasm. It carries out the reaction tRNA(Leu) + L-leucine + ATP = L-leucyl-tRNA(Leu) + AMP + diphosphate. The chain is Leucine--tRNA ligase from Rickettsia africae (strain ESF-5).